A 292-amino-acid polypeptide reads, in one-letter code: Coiled-coil domain-containing protein 137 (292 aa).

A compositionally biased stretch (low complexity) spans 1-16 (MAGLRRGAAAVAPAGT). Disordered regions lie at residues 1–94 (MAGL…AQAA), 139–183 (FLSK…EKAA), 205–243 (PELTAKPRMSVSRDQPGKKSLMLKKLLSPGSVSQPLTTS), and 263–292 (ALKRLQQQRQETQSPQPPHLPPGKKPEMQL). Composition is skewed to basic and acidic residues over residues 57–78 (KNQDEQEIPFRLREIMRSRQEM), 155–164 (PKKEKSERKK), and 173–183 (KARQRREEKAA). Positions 156 to 194 (KKEKSERKKAFQKRRLDKARQRREEKAAERLEQELLQDT) form a coiled coil. A compositionally biased stretch (low complexity) spans 222–232 (KKSLMLKKLLS). S232 bears the Phosphoserine mark. Residues 234–243 (GSVSQPLTTS) show a composition bias toward polar residues. Positions 247-276 (QRIVAEERERAVNAYRALKRLQQQRQETQS) form a coiled coil.

The protein localises to the chromosome. The protein is Coiled-coil domain-containing protein 137 (CCDC137) of Bos taurus (Bovine).